The sequence spans 27 residues: Allergen C-C (27 aa).

This sequence belongs to the protease inhibitor I6 (cereal trypsin/alpha-amylase inhibitor) family.

The protein localises to the secreted. This is Allergen C-C from Triticum aestivum (Wheat).